The following is a 502-amino-acid chain: Mannitol dehydrogenase 2 (502 aa).

Belongs to the mannitol dehydrogenase family.

It carries out the reaction D-mannitol + NAD(+) = D-fructose + NADH + H(+). Functionally, catalyzes the NAD(H)-dependent interconversion of D-fructose and D-mannitol in the mannitol metabolic pathway. The sequence is that of Mannitol dehydrogenase 2 from Saccharomyces cerevisiae (strain ATCC 204508 / S288c) (Baker's yeast).